Consider the following 814-residue polypeptide: ATP-dependent 6-phosphofructokinase 1 (814 aa).

Residues M1 to K420 are N-terminal catalytic PFK domain 1. ATP contacts are provided by residues G55, R118–S119, and G148–S151. Residue D149 coordinates Mg(2+). Residues S194–D196, R231, M238–R240, E294, R322, and H328–R331 contribute to the substrate site. Catalysis depends on D196, which acts as the Proton acceptor. Residues M421 to F435 are interdomain linker. Positions N436–F814 are C-terminal regulatory PFK domain 2. Beta-D-fructose 2,6-bisphosphate-binding positions include K505, T563 to N567, R601, M608 to G610, E664, R690, H696 to Q699, and R771.

It belongs to the phosphofructokinase type A (PFKA) family. ATP-dependent PFK group I subfamily. Eukaryotic two domain clade 'E' sub-subfamily. As to quaternary structure, homotetramer. It depends on Mg(2+) as a cofactor.

Its subcellular location is the cytoplasm. The enzyme catalyses beta-D-fructose 6-phosphate + ATP = beta-D-fructose 1,6-bisphosphate + ADP + H(+). The protein operates within carbohydrate degradation; glycolysis; D-glyceraldehyde 3-phosphate and glycerone phosphate from D-glucose: step 3/4. Its activity is regulated as follows. Allosterically activated by ADP, AMP, or fructose 2,6-bisphosphate, and allosterically inhibited by ATP or citrate. In terms of biological role, catalyzes the phosphorylation of D-fructose 6-phosphate to fructose 1,6-bisphosphate by ATP, the first committing step of glycolysis. The sequence is that of ATP-dependent 6-phosphofructokinase 1 from Caenorhabditis elegans.